The sequence spans 123 residues: Large ribosomal subunit protein uL14 (123 aa).

This sequence belongs to the universal ribosomal protein uL14 family. In terms of assembly, part of the 50S ribosomal subunit. Forms a cluster with proteins L3 and L19. In the 70S ribosome, L14 and L19 interact and together make contacts with the 16S rRNA in bridges B5 and B8.

Binds to 23S rRNA. Forms part of two intersubunit bridges in the 70S ribosome. This chain is Large ribosomal subunit protein uL14, found in Zymomonas mobilis subsp. mobilis (strain ATCC 31821 / ZM4 / CP4).